Reading from the N-terminus, the 26-residue chain is Conotoxin reg6(gamma) (26 aa).

Positions 1–12 (RVLEPGXEDPDV) are enriched in acidic residues. The interval 1–26 (RVLEPGXEDPDVGEPAGEYEHHLLEX) is disordered. Glutamate 4 is modified (4-carboxyglutamate). Proline 5 carries the post-translational modification 4-hydroxyproline. At glutamate 8 the chain carries 4-carboxyglutamate. Position 10 is a 4-hydroxyproline (proline 10). Glutamate 14 bears the 4-carboxyglutamate mark. Proline 15 is modified (4-hydroxyproline). A 4-carboxyglutamate mark is found at glutamate 18, glutamate 20, and glutamate 25.

As to expression, expressed by the venom duct.

It is found in the secreted. The chain is Conotoxin reg6(gamma) from Conus regius (Crown cone).